Here is a 498-residue protein sequence, read N- to C-terminus: Probable malate:quinone oxidoreductase 2 (498 aa).

It belongs to the MQO family. FAD serves as cofactor.

It carries out the reaction (S)-malate + a quinone = a quinol + oxaloacetate. Its pathway is carbohydrate metabolism; tricarboxylic acid cycle; oxaloacetate from (S)-malate (quinone route): step 1/1. The chain is Probable malate:quinone oxidoreductase 2 from Staphylococcus epidermidis (strain ATCC 35984 / DSM 28319 / BCRC 17069 / CCUG 31568 / BM 3577 / RP62A).